A 356-amino-acid polypeptide reads, in one-letter code: tRNA N6-adenosine threonylcarbamoyltransferase (356 aa).

Positions 115 and 119 each coordinate Fe cation. Residues 138 to 142, aspartate 171, glycine 184, and asparagine 283 each bind substrate; that span reads LVSGG. Residue aspartate 311 participates in Fe cation binding.

Belongs to the KAE1 / TsaD family. Fe(2+) serves as cofactor.

The protein resides in the cytoplasm. The enzyme catalyses L-threonylcarbamoyladenylate + adenosine(37) in tRNA = N(6)-L-threonylcarbamoyladenosine(37) in tRNA + AMP + H(+). In terms of biological role, required for the formation of a threonylcarbamoyl group on adenosine at position 37 (t(6)A37) in tRNAs that read codons beginning with adenine. Is involved in the transfer of the threonylcarbamoyl moiety of threonylcarbamoyl-AMP (TC-AMP) to the N6 group of A37, together with TsaE and TsaB. TsaD likely plays a direct catalytic role in this reaction. This is tRNA N6-adenosine threonylcarbamoyltransferase from Prochlorococcus marinus (strain AS9601).